Reading from the N-terminus, the 207-residue chain is Small ribosomal subunit protein uS4 (207 aa).

The tract at residues 33–54 (KLDSKPGQHGRTSGARTSDYGN) is disordered. Positions 42–53 (GRTSGARTSDYG) are enriched in polar residues. The 64-residue stretch at 97–160 (SRLDNVVYRM…KKQVRIAEAL (64 aa)) folds into the S4 RNA-binding domain.

It belongs to the universal ribosomal protein uS4 family. In terms of assembly, part of the 30S ribosomal subunit. Contacts protein S5. The interaction surface between S4 and S5 is involved in control of translational fidelity.

Its function is as follows. One of the primary rRNA binding proteins, it binds directly to 16S rRNA where it nucleates assembly of the body of the 30S subunit. In terms of biological role, with S5 and S12 plays an important role in translational accuracy. The chain is Small ribosomal subunit protein uS4 from Cupriavidus pinatubonensis (strain JMP 134 / LMG 1197) (Cupriavidus necator (strain JMP 134)).